A 549-amino-acid chain; its full sequence is Hydroxylamine reductase (549 aa).

[4Fe-4S] cluster is bound by residues cysteine 5, cysteine 8, cysteine 17, and cysteine 23. Positions 243, 267, 311, 403, 431, 456, 491, and 493 each coordinate hybrid [4Fe-2O-2S] cluster. Cysteine 403 carries the post-translational modification Cysteine persulfide.

It belongs to the HCP family. [4Fe-4S] cluster is required as a cofactor. It depends on hybrid [4Fe-2O-2S] cluster as a cofactor.

The protein localises to the cytoplasm. The catalysed reaction is A + NH4(+) + H2O = hydroxylamine + AH2 + H(+). Its function is as follows. Catalyzes the reduction of hydroxylamine to form NH(3) and H(2)O. The sequence is that of Hydroxylamine reductase from Desulfitobacterium hafniense (strain Y51).